The chain runs to 183 residues: Inner membrane-spanning protein YciB (183 aa).

Helical transmembrane passes span 22 to 44, 54 to 74, 76 to 96, 119 to 139, and 149 to 169; these read IYTATGALVVVTGLQLIYSWVRY, TFLLVGFFGGLTVFFHDDAFI, WKVTVINILFALGLLISRYGF, VNLAWVGFFTVCGLLNLYVAF, and FKVFGLLGMTLVFTLLSGVYL.

This sequence belongs to the YciB family.

The protein resides in the cell inner membrane. Its function is as follows. Plays a role in cell envelope biogenesis, maintenance of cell envelope integrity and membrane homeostasis. The sequence is that of Inner membrane-spanning protein YciB from Aeromonas salmonicida (strain A449).